A 273-amino-acid polypeptide reads, in one-letter code: Cell division protein ZipA (273 aa).

Position 1 (Met-1) is a topological domain, periplasmic. A helical transmembrane segment spans residues 2 to 22; the sequence is EFGLREWLIVIGIIVIAGILF. At 23–273 the chain is on the cytoplasmic side; the sequence is DGWRRMRGGK…FERRQLTQKR (251 aa). The tract at residues 65-125 is disordered; it reads EMEPQLDEDD…QEPKKSAKLS (61 aa). The segment covering 111 to 120 has biased composition (basic and acidic residues); it reads VDDKPQEPKK.

The protein belongs to the ZipA family. As to quaternary structure, interacts with FtsZ via their C-terminal domains.

The protein resides in the cell inner membrane. Essential cell division protein that stabilizes the FtsZ protofilaments by cross-linking them and that serves as a cytoplasmic membrane anchor for the Z ring. Also required for the recruitment to the septal ring of downstream cell division proteins. The polypeptide is Cell division protein ZipA (Ectopseudomonas mendocina (strain ymp) (Pseudomonas mendocina)).